The following is a 424-amino-acid chain: Zinc finger and BTB domain-containing protein 6 (424 aa).

The region spanning 33 to 97 is the BTB domain; sequence CDVSIYINDT…CYTGALEVKR (65 aa). Serine 202 is subject to Phosphoserine. C2H2-type zinc fingers lie at residues 301–323, 326–348, 354–376, and 382–405; these read HQCPRCPRGFLHVENYLRHLKMH, FLCLQCGKTFTQKKNLNRHIRGH, FQCTVCLKTFTAKSTLQDHLNIH, and YKCHCCDMDFKHKSALKKHLTSLH. The tract at residues 403–424 is disordered; sequence SLHGRSSGEKLPRHDLERQNLL. The span at 408-424 shows a compositional bias: basic and acidic residues; sequence SSGEKLPRHDLERQNLL.

Its subcellular location is the nucleus. May be involved in transcriptional regulation. This Bos taurus (Bovine) protein is Zinc finger and BTB domain-containing protein 6 (ZBTB6).